A 328-amino-acid chain; its full sequence is Probable cell division protein WhiA (328 aa).

A DNA-binding region (H-T-H motif) is located at residues 275–308 (SLEELGQLASPPMTKDAVAGRIRRLLSMADKRAE).

The protein belongs to the WhiA family.

Functionally, involved in cell division and chromosome segregation. This Corynebacterium urealyticum (strain ATCC 43042 / DSM 7109) protein is Probable cell division protein WhiA.